Reading from the N-terminus, the 132-residue chain is Small ribosomal subunit protein uS8 (132 aa).

This sequence belongs to the universal ribosomal protein uS8 family. Part of the 30S ribosomal subunit. Contacts proteins S5 and S12.

Its function is as follows. One of the primary rRNA binding proteins, it binds directly to 16S rRNA central domain where it helps coordinate assembly of the platform of the 30S subunit. The sequence is that of Small ribosomal subunit protein uS8 from Agrobacterium fabrum (strain C58 / ATCC 33970) (Agrobacterium tumefaciens (strain C58)).